The sequence spans 460 residues: Bifunctional protein GlmU (460 aa).

A pyrophosphorylase region spans residues 1–237 (MSSNQYTAGA…DPDLLGVNTP (237 aa)). UDP-N-acetyl-alpha-D-glucosamine contacts are provided by residues 13–16 (LAAG), Lys27, Gln78, and 83–84 (GT). Mg(2+) is bound at residue Asp109. Residues Gly146, Glu160, Asn177, and Asn235 each coordinate UDP-N-acetyl-alpha-D-glucosamine. Position 235 (Asn235) interacts with Mg(2+). A linker region spans residues 238–258 (AELMRSEELLRENIVTRHLHN). Positions 259-460 (GVHVHAAGSV…QKNLRKTRHS (202 aa)) are N-acetyltransferase. The UDP-N-acetyl-alpha-D-glucosamine site is built by Arg341 and Lys359. The Proton acceptor role is filled by His371. The UDP-N-acetyl-alpha-D-glucosamine site is built by Tyr374 and Asn385. Acetyl-CoA-binding positions include Ala388, 394–395 (NY), Ser413, Ala431, and Arg448.

The protein in the N-terminal section; belongs to the N-acetylglucosamine-1-phosphate uridyltransferase family. It in the C-terminal section; belongs to the transferase hexapeptide repeat family. In terms of assembly, homotrimer. Requires Mg(2+) as cofactor.

The protein resides in the cytoplasm. The enzyme catalyses alpha-D-glucosamine 1-phosphate + acetyl-CoA = N-acetyl-alpha-D-glucosamine 1-phosphate + CoA + H(+). It catalyses the reaction N-acetyl-alpha-D-glucosamine 1-phosphate + UTP + H(+) = UDP-N-acetyl-alpha-D-glucosamine + diphosphate. It participates in nucleotide-sugar biosynthesis; UDP-N-acetyl-alpha-D-glucosamine biosynthesis; N-acetyl-alpha-D-glucosamine 1-phosphate from alpha-D-glucosamine 6-phosphate (route II): step 2/2. Its pathway is nucleotide-sugar biosynthesis; UDP-N-acetyl-alpha-D-glucosamine biosynthesis; UDP-N-acetyl-alpha-D-glucosamine from N-acetyl-alpha-D-glucosamine 1-phosphate: step 1/1. It functions in the pathway bacterial outer membrane biogenesis; LPS lipid A biosynthesis. Functionally, catalyzes the last two sequential reactions in the de novo biosynthetic pathway for UDP-N-acetylglucosamine (UDP-GlcNAc). The C-terminal domain catalyzes the transfer of acetyl group from acetyl coenzyme A to glucosamine-1-phosphate (GlcN-1-P) to produce N-acetylglucosamine-1-phosphate (GlcNAc-1-P), which is converted into UDP-GlcNAc by the transfer of uridine 5-monophosphate (from uridine 5-triphosphate), a reaction catalyzed by the N-terminal domain. The polypeptide is Bifunctional protein GlmU (Oleidesulfovibrio alaskensis (strain ATCC BAA-1058 / DSM 17464 / G20) (Desulfovibrio alaskensis)).